The primary structure comprises 269 residues: MKIALGIEYNGQNYYGWQRQEKVRSVQEELEKALSHIANEKIEIFCAGRTDSGVSGTGQVVHFETNAVRPEKAWAFGTNAHLPDDIAVSWAKQVDDEFHARFSATARRYRYILYCNKLRSAILAGGITHCHLDLDAEKMHQAGQCLLGEQDFSSFRAAQCQSHTPWRNVHHLNVSRIGKYIIVDIQANAFVHHMVRNIVGSLIEVGTGNQPIEWMQWLLEQKNRQLAAPTAKPDGLYLVDVIYPQKFDIPKRPIGPLFLEDGLLNRPLK.

Residue aspartate 51 is the Nucleophile of the active site. A substrate-binding site is contributed by tyrosine 109.

Belongs to the tRNA pseudouridine synthase TruA family. In terms of assembly, homodimer.

It carries out the reaction uridine(38/39/40) in tRNA = pseudouridine(38/39/40) in tRNA. Functionally, formation of pseudouridine at positions 38, 39 and 40 in the anticodon stem and loop of transfer RNAs. This Haemophilus influenzae (strain ATCC 51907 / DSM 11121 / KW20 / Rd) protein is tRNA pseudouridine synthase A.